We begin with the raw amino-acid sequence, 79 residues long: MALSGLQRQVIHFYRRCLHAAKAKEQPYNERWMAFVHQEFRKNQTISKRDFFYIEHLLRVGQRQYEAYSRPEVKDIHFS.

It belongs to the complex I LYR family. SDHAF1 subfamily. In terms of assembly, interacts with sdh2 within an sdh1-sdh2 subcomplex.

It localises to the mitochondrion matrix. Its function is as follows. Plays an essential role in the assembly of succinate dehydrogenase (SDH), an enzyme complex (also referred to as respiratory complex II) that is a component of both the tricarboxylic acid (TCA) cycle and the mitochondrial electron transport chain, and which couples the oxidation of succinate to fumarate with the reduction of ubiquinone (coenzyme Q) to ubiquinol. Promotes maturation of the iron-sulfur protein subunit sdh2 of the SDH catalytic dimer, protecting it from the deleterious effects of oxidants. May act together with SDHAF3. This Schizosaccharomyces pombe (strain 972 / ATCC 24843) (Fission yeast) protein is Succinate dehydrogenase assembly factor 1, mitochondrial.